A 155-amino-acid chain; its full sequence is CASP-like protein 5B2 (155 aa).

Residues 1–18 (MWEVAWWRPGTWGGLAMR) are Cytoplasmic-facing. Residues 19-39 (VGQVAFAGASIGVMASGAGFA) traverse the membrane as a helical segment. Asparagine 40 carries N-linked (GlcNAc...) asparagine glycosylation. The Extracellular segment spans residues 40 to 43 (NYTA). Residues 44–64 (FCYLIASMGLQSLWSLGLACL) form a helical membrane-spanning segment. The Cytoplasmic portion of the chain corresponds to 65-77 (DVYALTVKRDLNN). The chain crosses the membrane as a helical span at residues 78–98 (ALLVSLFVIGDWVTALLSFAA). Residues 99 to 128 (SCSAGGVMVLFKRDVLFCRRYPQLPCGRFE) lie on the Extracellular side of the membrane. A helical membrane pass occupies residues 129–149 (LAVALAFLSWALSATSAIIMF). Residues 150–155 (CLLAAF) are Cytoplasmic-facing.

Belongs to the Casparian strip membrane proteins (CASP) family. Homodimer and heterodimers.

It is found in the cell membrane. This chain is CASP-like protein 5B2, found in Oryza sativa subsp. indica (Rice).